Consider the following 312-residue polypeptide: Aminoacyl tRNA synthase complex-interacting multifunctional protein 1 (312 aa).

Methionine 1 carries the post-translational modification N-acetylmethionine. An N-acetylalanine modification is found at alanine 2. Residues 6-46 (AVLKRLEQKGAEADQIIEYLKQQVSLLKEKAILQATLREEK) are required for fibroblast proliferation. The interval 54-194 (KLKKEIEELK…APRTVVSGLV (141 aa)) is interaction with HSP90B1. Residues 101–114 (AVTTVSSGTKEQIK) form a required for endothelial cell death region. Residues 107 to 147 (SGTKEQIKGGTGDEKKAKEKIEKKGEKKEKKQQSIAGSADS) form a disordered region. The span at 111-138 (EQIKGGTGDEKKAKEKIEKKGEKKEKKQ) shows a compositional bias: basic and acidic residues. The tract at residues 114–192 (KGGTGDEKKA…EIAPRTVVSG (79 aa)) is required for endothelial cell migration. Lysine 137 participates in a covalent cross-link: Glycyl lysine isopeptide (Lys-Gly) (interchain with G-Cter in SUMO1). Phosphoserine is present on serine 140. The tRNA-binding domain maps to 151 to 252 (DVSRLDLRIG…NGSVPGDRIT (102 aa)). Lysine 269 carries the post-translational modification N6-succinyllysine.

Homodimer. Part of the multisynthetase complex (MSC), a multisubunit complex that groups tRNA ligases for Arg (RARS1), Asp (DARS1), Gln (QARS1), Ile (IARS1), Leu (LARS1), Lys (KARS1), Met (MARS1) the bifunctional ligase for Glu and Pro (EPRS1) and the auxiliary subunits AIMP1/p43, AIMP2/p38 and EEF1E1/p18. Interacts (via N-terminus) with RARS1 (via N-terminus). Part of a complex composed of RARS1, QARS1 and AIMP1. Interacts (via C-terminus) with SMURF2. Interacts (via N-terminus) with HSP90B1/gp96 (via C-terminus). Interacts with PSMA7. Interacts with TARS3. Cleaved by caspase-7 in response to apoptosis to produce EMAP-II.

Its subcellular location is the nucleus. The protein localises to the cytoplasm. It localises to the cytosol. It is found in the secreted. The protein resides in the endoplasmic reticulum. Its subcellular location is the golgi apparatus. Functionally, non-catalytic component of the multisynthase complex. Stimulates the catalytic activity of cytoplasmic arginyl-tRNA synthase. Binds tRNA. Possesses inflammatory cytokine activity. Negatively regulates TGF-beta signaling through stabilization of SMURF2 by binding to SMURF2 and inhibiting its SMAD7-mediated degradation. Involved in glucose homeostasis through induction of glucagon secretion at low glucose levels. Promotes dermal fibroblast proliferation and wound repair. Regulates KDELR1-mediated retention of HSP90B1/gp96 in the endoplasmic reticulum. Plays a role in angiogenesis by inducing endothelial cell migration at low concentrations and endothelian cell apoptosis at high concentrations. Induces maturation of dendritic cells and monocyte cell adhesion. Modulates endothelial cell responses by degrading HIF-1A through interaction with PSMA7. The polypeptide is Aminoacyl tRNA synthase complex-interacting multifunctional protein 1 (AIMP1) (Homo sapiens (Human)).